The sequence spans 224 residues: Ribosomal RNA small subunit methyltransferase G (224 aa).

S-adenosyl-L-methionine contacts are provided by residues Gly-92, Leu-97, 143-144 (VE), and Arg-156.

It belongs to the methyltransferase superfamily. RNA methyltransferase RsmG family.

It is found in the cytoplasm. It carries out the reaction guanosine(527) in 16S rRNA + S-adenosyl-L-methionine = N(7)-methylguanosine(527) in 16S rRNA + S-adenosyl-L-homocysteine. Functionally, specifically methylates the N7 position of guanine in position 527 of 16S rRNA. This is Ribosomal RNA small subunit methyltransferase G from Albidiferax ferrireducens (strain ATCC BAA-621 / DSM 15236 / T118) (Rhodoferax ferrireducens).